A 356-amino-acid polypeptide reads, in one-letter code: Holliday junction branch migration complex subunit RuvB (356 aa).

Positions 4–192 are large ATPase domain (RuvB-L); sequence DDTTDATADE…FGFTAHMEFY (189 aa). ATP contacts are provided by residues Leu31, Arg32, Gly73, Lys76, Thr77, Thr78, 139-141, Arg182, Tyr192, and Arg229; that span reads EDF. Thr77 is a binding site for Mg(2+). Residues 193–263 are small ATPAse domain (RuvB-S); the sequence is EPHELERVIH…IAAAALKVYE (71 aa). Residues 266–356 are head domain (RuvB-H); that stretch reads ARGLDRLDRG…GNGQGDLFGA (91 aa). Residues Arg302, Arg321, and Arg326 each coordinate DNA.

The protein belongs to the RuvB family. In terms of assembly, homohexamer. Forms an RuvA(8)-RuvB(12)-Holliday junction (HJ) complex. HJ DNA is sandwiched between 2 RuvA tetramers; dsDNA enters through RuvA and exits via RuvB. An RuvB hexamer assembles on each DNA strand where it exits the tetramer. Each RuvB hexamer is contacted by two RuvA subunits (via domain III) on 2 adjacent RuvB subunits; this complex drives branch migration. In the full resolvosome a probable DNA-RuvA(4)-RuvB(12)-RuvC(2) complex forms which resolves the HJ.

The protein resides in the cytoplasm. The enzyme catalyses ATP + H2O = ADP + phosphate + H(+). Functionally, the RuvA-RuvB-RuvC complex processes Holliday junction (HJ) DNA during genetic recombination and DNA repair, while the RuvA-RuvB complex plays an important role in the rescue of blocked DNA replication forks via replication fork reversal (RFR). RuvA specifically binds to HJ cruciform DNA, conferring on it an open structure. The RuvB hexamer acts as an ATP-dependent pump, pulling dsDNA into and through the RuvAB complex. RuvB forms 2 homohexamers on either side of HJ DNA bound by 1 or 2 RuvA tetramers; 4 subunits per hexamer contact DNA at a time. Coordinated motions by a converter formed by DNA-disengaged RuvB subunits stimulates ATP hydrolysis and nucleotide exchange. Immobilization of the converter enables RuvB to convert the ATP-contained energy into a lever motion, pulling 2 nucleotides of DNA out of the RuvA tetramer per ATP hydrolyzed, thus driving DNA branch migration. The RuvB motors rotate together with the DNA substrate, which together with the progressing nucleotide cycle form the mechanistic basis for DNA recombination by continuous HJ branch migration. Branch migration allows RuvC to scan DNA until it finds its consensus sequence, where it cleaves and resolves cruciform DNA. The polypeptide is Holliday junction branch migration complex subunit RuvB (Streptomyces avermitilis (strain ATCC 31267 / DSM 46492 / JCM 5070 / NBRC 14893 / NCIMB 12804 / NRRL 8165 / MA-4680)).